The primary structure comprises 494 residues: Amidophosphoribosyltransferase (494 aa).

A propeptide spanning residues 1-10 is cleaved from the precursor; that stretch reads MFNYSGLNEE. The Nucleophile role is filled by Cys-11. The Glutamine amidotransferase type-2 domain maps to 11 to 231; sequence CGVFGIWNHP…AGEYVVINDK (221 aa). Ser-294, Asp-356, and Asp-357 together coordinate Mg(2+).

This sequence in the C-terminal section; belongs to the purine/pyrimidine phosphoribosyltransferase family. Mg(2+) serves as cofactor.

It carries out the reaction 5-phospho-beta-D-ribosylamine + L-glutamate + diphosphate = 5-phospho-alpha-D-ribose 1-diphosphate + L-glutamine + H2O. Its pathway is purine metabolism; IMP biosynthesis via de novo pathway; N(1)-(5-phospho-D-ribosyl)glycinamide from 5-phospho-alpha-D-ribose 1-diphosphate: step 1/2. Its function is as follows. Catalyzes the formation of phosphoribosylamine from phosphoribosylpyrophosphate (PRPP) and glutamine. The chain is Amidophosphoribosyltransferase from Staphylococcus aureus (strain MRSA252).